The primary structure comprises 254 residues: Phosphonates import ATP-binding protein PhnC (254 aa).

Residues 2–246 (IQLKNVSKIY…VFDDIYNGGN (245 aa)) enclose the ABC transporter domain. 35-42 (GLSGAGKS) is a binding site for ATP.

Belongs to the ABC transporter superfamily. Phosphonates importer (TC 3.A.1.9.1) family. In terms of assembly, the complex is composed of two ATP-binding proteins (PhnC), two transmembrane proteins (PhnE) and a solute-binding protein (PhnD).

The protein localises to the cell membrane. It catalyses the reaction phosphonate(out) + ATP + H2O = phosphonate(in) + ADP + phosphate + H(+). In terms of biological role, part of the ABC transporter complex PhnCDE involved in phosphonates import. Responsible for energy coupling to the transport system. The polypeptide is Phosphonates import ATP-binding protein PhnC (Lactobacillus johnsonii (strain CNCM I-12250 / La1 / NCC 533)).